A 744-amino-acid chain; its full sequence is MEQTYQYAWIIPFLPLPVPMLIGLGLLFFPTATKSLRRMWAFQSVLLLSIVMIFSINLSIQQINSSSVYQYVWSWIINNDFSLELGYLIDPLTSIMSILITTVGIMVLIYSDNYMSHDHGYLRFFAYMSFFSTSMLGLVTSSNLIQIYIFWELVGIRSYLLIGFWFTRPVAAKACQKAFVTNRVGDFGLLLGILGFYWITGSFEFRNLFQIFNNLISNNEVNFLFVTLCAVLLFAGAIAKSAQFPLHVWLPDAMEGPTPISALIHAATMVAAGIFLVARLLPLFIVIPHIMNFISLIGIITVFLGATLALAQKDIKRGLAYSTMSQLGYMMLALGMGSYRSALFHLITHAYSKALLFLGSGSVIHSMETLVGYCPKKSQNMVLMGGLTKHVPITKTSFFLGTLSLCGIPPLACFWSKDEILNDSWLYSPIFAIIAWSTAGLTAFYMCRMYLLTFEGHLNVHFQNYSGKKNTPFYSISVWGKEGSKISKKNFSLVTLLKMKTNGRASFFSNKVYKIDENVRSLIQPFLSISYFVNTKTYSYPYESDNTMLFPILILVLFTLFVGFLGIPFNQDGVDLDILSKWLTPSINLLHKNSNNSIDWYEFCKDAVFSVSISSFGIFIAFFLYKPVYSSFQNLDLINSFVKIGPKRIFFDKIKNGIYDWSYNRGYIDAFYGTFLTVGMRKLAEFAHFFDRRIIDGIPNGVGLMSFFVAEVIKSVGGGRISSYLFFYFSYLSFFLLIYYFFHF.

16 helical membrane-spanning segments follow: residues 9 to 29 (WIIPFLPLPVPMLIGLGLLFF), 40 to 60 (WAFQSVLLLSIVMIFSINLSI), 89 to 109 (IDPLTSIMSILITTVGIMVLI), 125 to 145 (FAYMSFFSTSMLGLVTSSNLI), 147 to 167 (IYIFWELVGIRSYLLIGFWFT), 185 to 205 (GDFGLLLGILGFYWITGSFEF), 219 to 239 (NEVNFLFVTLCAVLLFAGAIA), 258 to 278 (TPISALIHAATMVAAGIFLVA), 290 to 312 (IMNFISLIGIITVFLGATLALAQ), 327 to 347 (LGYMMLALGMGSYRSALFHLI), 354 to 374 (ALLFLGSGSVIHSMETLVGYC), 396 to 416 (TSFFLGTLSLCGIPPLACFWS), 425 to 445 (WLYSPIFAIIAWSTAGLTAFY), 549 to 569 (LFPILILVLFTLFVGFLGIPF), 608 to 628 (VFSVSISSFGIFIAFFLYKPV), and 724 to 744 (YLFFYFSYLSFFLLIYYFFHF).

It belongs to the complex I subunit 5 family. As to quaternary structure, NDH is composed of at least 16 different subunits, 5 of which are encoded in the nucleus.

It is found in the plastid. Its subcellular location is the chloroplast thylakoid membrane. It catalyses the reaction a plastoquinone + NADH + (n+1) H(+)(in) = a plastoquinol + NAD(+) + n H(+)(out). The catalysed reaction is a plastoquinone + NADPH + (n+1) H(+)(in) = a plastoquinol + NADP(+) + n H(+)(out). NDH shuttles electrons from NAD(P)H:plastoquinone, via FMN and iron-sulfur (Fe-S) centers, to quinones in the photosynthetic chain and possibly in a chloroplast respiratory chain. The immediate electron acceptor for the enzyme in this species is believed to be plastoquinone. Couples the redox reaction to proton translocation, and thus conserves the redox energy in a proton gradient. The protein is NAD(P)H-quinone oxidoreductase subunit 5, chloroplastic (ndhF) of Gerbera jamesonii (Transvaal daisy).